A 428-amino-acid chain; its full sequence is Probable glucose-6-phosphate isomerase (428 aa).

Glu269 (proton donor) is an active-site residue. Residues His290 and Lys401 contribute to the active site.

This sequence belongs to the GPI family.

The protein resides in the cytoplasm. It carries out the reaction alpha-D-glucose 6-phosphate = beta-D-fructose 6-phosphate. It functions in the pathway carbohydrate biosynthesis; gluconeogenesis. Its pathway is carbohydrate degradation; glycolysis; D-glyceraldehyde 3-phosphate and glycerone phosphate from D-glucose: step 2/4. Catalyzes the reversible isomerization of glucose-6-phosphate to fructose-6-phosphate. In Natronomonas pharaonis (strain ATCC 35678 / DSM 2160 / CIP 103997 / JCM 8858 / NBRC 14720 / NCIMB 2260 / Gabara) (Halobacterium pharaonis), this protein is Probable glucose-6-phosphate isomerase.